The sequence spans 151 residues: Nucleoside diphosphate kinase (151 aa).

ATP-binding residues include lysine 11, phenylalanine 59, arginine 87, threonine 93, arginine 104, and asparagine 114. The active-site Pros-phosphohistidine intermediate is histidine 117.

Belongs to the NDK family. In terms of assembly, homohexamer. Requires Mg(2+) as cofactor.

The catalysed reaction is a 2'-deoxyribonucleoside 5'-diphosphate + ATP = a 2'-deoxyribonucleoside 5'-triphosphate + ADP. It carries out the reaction a ribonucleoside 5'-diphosphate + ATP = a ribonucleoside 5'-triphosphate + ADP. In terms of biological role, major role in the synthesis of nucleoside triphosphates other than ATP. The ATP gamma phosphate is transferred to the NDP beta phosphate via a ping-pong mechanism, using a phosphorylated active-site intermediate. The protein is Nucleoside diphosphate kinase of Ginglymostoma cirratum (Nurse shark).